The following is a 166-amino-acid chain: Putative peroxiredoxin (166 aa).

The Thioredoxin domain maps to 1 to 166; the sequence is EIGSTIPNAT…SSAATVLSKL (166 aa). The active-site Cysteine sulfenic acid (-SOH) intermediate is the Cys-56. The Microbody targeting signal signature appears at 164–166; sequence SKL.

This sequence belongs to the peroxiredoxin family. Prx5 subfamily. As to quaternary structure, homodimer; disulfide-linked, upon oxidation.

It catalyses the reaction a hydroperoxide + [thioredoxin]-dithiol = an alcohol + [thioredoxin]-disulfide + H2O. Functionally, thiol-specific peroxidase that catalyzes the reduction of hydrogen peroxide and organic hydroperoxides to water and alcohols, respectively. Plays a role in cell protection against oxidative stress by detoxifying peroxides and as sensor of hydrogen peroxide-mediated signaling events. This chain is Putative peroxiredoxin, found in Malassezia furfur (Pityriasis versicolor infection agent).